A 185-amino-acid polypeptide reads, in one-letter code: ATP-dependent protease subunit HslV (185 aa).

Thr-2 is an active-site residue. Positions 157, 160, and 163 each coordinate Na(+).

The protein belongs to the peptidase T1B family. HslV subfamily. In terms of assembly, a double ring-shaped homohexamer of HslV is capped on each side by a ring-shaped HslU homohexamer. The assembly of the HslU/HslV complex is dependent on binding of ATP.

The protein resides in the cytoplasm. It catalyses the reaction ATP-dependent cleavage of peptide bonds with broad specificity.. With respect to regulation, allosterically activated by HslU binding. Protease subunit of a proteasome-like degradation complex believed to be a general protein degrading machinery. The protein is ATP-dependent protease subunit HslV of Vibrio cholerae serotype O1 (strain ATCC 39315 / El Tor Inaba N16961).